The chain runs to 581 residues: Adenine deaminase (581 aa).

This sequence belongs to the metallo-dependent hydrolases superfamily. Adenine deaminase family. Mn(2+) is required as a cofactor.

It carries out the reaction adenine + H2O + H(+) = hypoxanthine + NH4(+). The protein is Adenine deaminase of Clostridium botulinum (strain Eklund 17B / Type B).